The primary structure comprises 239 residues: Protein GrpE (239 aa).

2 disordered regions span residues 1–60 (MIEN…SNND) and 208–239 (SMGPGKQKSQQEVEKDTVEGDVDSDANTSEDV). Positions 28–42 (SMQNSTTENDELSSQ) are enriched in polar residues. 2 stretches are compositionally biased toward basic and acidic residues: residues 43-53 (KTEEINTEELK) and 216-225 (SQQEVEKDTV). Residues 226 to 239 (EGDVDSDANTSEDV) are compositionally biased toward acidic residues.

Belongs to the GrpE family. In terms of assembly, homodimer.

It is found in the cytoplasm. Its function is as follows. Participates actively in the response to hyperosmotic and heat shock by preventing the aggregation of stress-denatured proteins, in association with DnaK and GrpE. It is the nucleotide exchange factor for DnaK and may function as a thermosensor. Unfolded proteins bind initially to DnaJ; upon interaction with the DnaJ-bound protein, DnaK hydrolyzes its bound ATP, resulting in the formation of a stable complex. GrpE releases ADP from DnaK; ATP binding to DnaK triggers the release of the substrate protein, thus completing the reaction cycle. Several rounds of ATP-dependent interactions between DnaJ, DnaK and GrpE are required for fully efficient folding. The polypeptide is Protein GrpE (Prochlorococcus marinus (strain MIT 9301)).